The following is a 256-amino-acid chain: UstYa family oxidase phomYc (256 aa).

The helical transmembrane segment at 38 to 58 threads the bilayer; that stretch reads LVLVLQFVLIISLLASLHILG. Asparagine 64 and asparagine 132 each carry an N-linked (GlcNAc...) asparagine glycan. An HXXHC 1 motif is present at residues 158 to 162; that stretch reads HQLHC. A glycan (N-linked (GlcNAc...) asparagine) is linked at asparagine 179. The HXXHC 2 signature appears at 193-197; sequence HIDHC.

The protein belongs to the ustYa family.

It is found in the membrane. Its pathway is mycotoxin biosynthesis. UstYa family oxidase; part of the gene cluster that mediates the biosynthesis of the phomopsins, a group of hexapeptide mycotoxins which infects lupins and causes lupinosis disease in livestock. Within the pathway, phomYc catalyzes the desaturation of the Ile moiety into 2,3-dehydroisoleucine (dIle). The pathway starts with the processing of the precursor phomA by several endopeptidases including kexin proteases as well as the cluster-specific S41 family peptidase phomP1 and the oligopeptidase phomG to produce 10 identical copies of the hexapeptide Tyr-Val-Ile-Pro-Ile-Asp. After being excised from the precursor peptide, the core peptides are cyclized and modified post-translationally by enzymes encoded within the gene cluster. The timing and order of proteolysis of the phomA precursor and PTMs are still unknown. Two tyrosinase-like enzymes, phomQ1 and phomQ2, catalyze the chlorination and hydroxylation of Tyr, respectively. PhomYb, is proposed to be involved in the construction of the macrocyclic structure. The other 4 ustYa family proteins may be involved in PTMs that generate the unique structure of phomopsin A. PhomYa is required for the hydroxylation of C-beta of Tyr. PhomYc, phomYd, and phomYe are responsible for the biosynthesis of 2,3-dehydroisoleucine (dIle), 2,3-dehydroaspartic acid (dAsp), and 3,4-dehydroproline (dPro), respectively. While dIle formation by phomYc is indispensable for the installation of dAsp by phomYd, the order of the other PTMs have not been elucidated yet. Most of the biosynthetic enzymes likely have broad substrate specificity, and thus, there might be a metabolic grid from a precursor to phomopsin A. The enzyme(s) responsible for the biosynthesis of 3,4-dehydrovaline (dVal) have also not been identified yet. Finally, phomM acts as an S-adenosylmethionine-dependent alpha-N-methyltransferase that catalyzes two successive N-methylation reactions, converting N-desmethyl-phomopsin A to phomopsin A and phomopsin A further to an N,N-dimethylated congener called phomopsin E. This is UstYa family oxidase phomYc from Diaporthe leptostromiformis (Lupinosis disease fungus).